The sequence spans 809 residues: Leucine--tRNA ligase (809 aa).

Positions 40 to 50 (PYPSGRIHMGH) match the 'HIGH' region motif. The 'KMSKS' region signature appears at 579–583 (KMSKS). Lys582 is an ATP binding site.

It belongs to the class-I aminoacyl-tRNA synthetase family.

Its subcellular location is the cytoplasm. It catalyses the reaction tRNA(Leu) + L-leucine + ATP = L-leucyl-tRNA(Leu) + AMP + diphosphate. The chain is Leucine--tRNA ligase from Campylobacter jejuni subsp. doylei (strain ATCC BAA-1458 / RM4099 / 269.97).